A 544-amino-acid polypeptide reads, in one-letter code: Chaperonin GroEL 1 (544 aa).

ATP-binding positions include 29-32 (TLGP), 86-90 (DGTTT), glycine 413, 479-481 (NAA), and aspartate 495.

The protein belongs to the chaperonin (HSP60) family. As to quaternary structure, forms a cylinder of 14 subunits composed of two heptameric rings stacked back-to-back. Interacts with the co-chaperonin GroES.

The protein resides in the cytoplasm. The enzyme catalyses ATP + H2O + a folded polypeptide = ADP + phosphate + an unfolded polypeptide.. Together with its co-chaperonin GroES, plays an essential role in assisting protein folding. The GroEL-GroES system forms a nano-cage that allows encapsulation of the non-native substrate proteins and provides a physical environment optimized to promote and accelerate protein folding. This is Chaperonin GroEL 1 from Synechococcus sp. (strain CC9902).